A 477-amino-acid polypeptide reads, in one-letter code: RNA pseudouridine synthase 4, mitochondrial (477 aa).

Residues 1-43 (MAKWRLATATLRRQLQSSSPTISTFKNPTKALSAAAHQSTRSY) constitute a mitochondrion transit peptide. Residues 34-55 (AAAHQSTRSYSTTQTDDSRGKW) are disordered. The segment covering 36–48 (AHQSTRSYSTTQT) has biased composition (polar residues). One can recognise an S4 RNA-binding domain in the interval 90–175 (TTALRWILRC…AKKESFQCSD (86 aa)). The active site involves Asp-236.

It belongs to the pseudouridine synthase RluA family.

It is found in the mitochondrion. It catalyses the reaction a uridine in RNA = a pseudouridine in RNA. This Arabidopsis thaliana (Mouse-ear cress) protein is RNA pseudouridine synthase 4, mitochondrial.